We begin with the raw amino-acid sequence, 353 residues long: Guanine nucleotide-binding protein subunit beta-5 (353 aa).

WD repeat units follow at residues 61–100 (GHGNKVLCMDWCKDKRRIVSSSQDGKVIVWDSFTTNKEHA), 103–142 (MPCTWVMACAYAPSGCAIACGGLDNKCSVYPLTFDKNENM), 151–192 (MHTN…QSFH), 194–236 (HGAD…QAFE), 237–276 (THESDINSVRYYPSGDAFASGSDDATCRLYDLRADREVAI), 278–320 (SKES…RVSI), and 323–352 (GHENRVSTLRVSPDGTAFCSGSWDHTLRVW).

The protein belongs to the WD repeat G protein beta family. As to quaternary structure, component of a complex composed of RGS9 (isoform RGS9-1), GNB5 and RGS9BP; within this complex, the presence of GNB5 stabilizes both itself and RGS9 and increases RGS9 GTPase-activating protein (GAP) activity. Interacts with RGS7, forming the RGS7-GNB5 complex; within this complex, the presence of GNB5 increases RGS7 GTPase-activating protein (GAP) activity. Interacts with GPR158; promotes the GTPase activator activity of the RGS7-GNB5 complex in absence of glycine, in contrast GTPase activator activity of the RGS7-GNB5 complex is inhibited in presence of glycine. Interacts with RGS6.

Its subcellular location is the membrane. Enhances GTPase-activating protein (GAP) activity of regulator of G protein signaling (RGS) proteins, such as RGS7 and RGS9, hence involved in the termination of the signaling initiated by the G protein coupled receptors (GPCRs) by accelerating the GTP hydrolysis on the G-alpha subunits, thereby promoting their inactivation. Increases RGS7 GTPase-activating protein (GAP) activity, thereby regulating mood and cognition. Increases RGS9 GTPase-activating protein (GAP) activity, hence contributes to the deactivation of G protein signaling initiated by D(2) dopamine receptors. May play an important role in neuronal signaling, including in the parasympathetic, but not sympathetic, control of heart rate. The polypeptide is Guanine nucleotide-binding protein subunit beta-5 (GNB5) (Oryctolagus cuniculus (Rabbit)).